A 239-amino-acid polypeptide reads, in one-letter code: Fatty acid metabolism regulator protein (239 aa).

The region spanning 6–74 (KGPASFAEKY…HGKPTRVNNF (69 aa)) is the HTH gntR-type domain. A DNA-binding region (H-T-H motif) is located at residues 34–53 (ERELSELIGVTRTTLREVLQ).

As to quaternary structure, homodimer.

It is found in the cytoplasm. Functionally, multifunctional regulator of fatty acid metabolism. The protein is Fatty acid metabolism regulator protein of Shewanella pealeana (strain ATCC 700345 / ANG-SQ1).